Here is an 84-residue protein sequence, read N- to C-terminus: Succinate dehydrogenase membrane anchor subunit (84 aa).

The Mitochondrial matrix segment spans residues 1–3; that stretch reads MIT. Residues 4 to 24 traverse the membrane as a helical segment; it reads FQWLIVRVVALFISLTILIDI. Over 25 to 31 the chain is Mitochondrial intermembrane; sequence EMFVVML. A helical membrane pass occupies residues 32–52; it reads SFLIIHISIGLKAIIHDYIHF. H37 is a heme binding site. Residue Y49 participates in a ubiquinone binding. The Mitochondrial matrix segment spans residues 53-58; the sequence is QKIKLM. Residues 59 to 81 form a helical membrane-spanning segment; the sequence is LLILLRVSAIEISRSFRTFYIII. Residues 82 to 84 are Mitochondrial intermembrane-facing; it reads KNT.

As to quaternary structure, part of an enzyme complex containing four subunits: a flavoprotein, an iron-sulfur protein, plus two membrane-anchoring proteins. The cofactor is heme.

The protein localises to the mitochondrion inner membrane. Its pathway is carbohydrate metabolism; tricarboxylic acid cycle. Functionally, membrane-anchoring subunit of succinate dehydrogenase (SDH). The sequence is that of Succinate dehydrogenase membrane anchor subunit (SDH4) from Chondrus crispus (Carrageen Irish moss).